A 465-amino-acid polypeptide reads, in one-letter code: Trigger factor (465 aa).

A PPIase FKBP-type domain is found at glycine 163–alanine 248. Residues glutamate 431–lysine 465 form a disordered region. A compositionally biased stretch (basic and acidic residues) spans glutamate 443 to lysine 465.

This sequence belongs to the FKBP-type PPIase family. Tig subfamily.

Its subcellular location is the cytoplasm. It carries out the reaction [protein]-peptidylproline (omega=180) = [protein]-peptidylproline (omega=0). Its function is as follows. Involved in protein export. Acts as a chaperone by maintaining the newly synthesized protein in an open conformation. Functions as a peptidyl-prolyl cis-trans isomerase. This chain is Trigger factor, found in Mesomycoplasma hyopneumoniae (strain J / ATCC 25934 / NCTC 10110) (Mycoplasma hyopneumoniae).